The sequence spans 442 residues: Mitochondrial distribution and morphology protein 12 (442 aa).

The SMP-LTD domain occupies M1–V442. Disordered regions lie at residues N67 to Y125, L202 to R277, and E364 to N387. Positions F69 to S80 are enriched in acidic residues. The span at P90–P100 shows a compositional bias: polar residues. A compositionally biased stretch (low complexity) spans N101–N112. The span at R213–D222 shows a compositional bias: basic and acidic residues. Positions S227 to T245 are enriched in low complexity.

It belongs to the MDM12 family. As to quaternary structure, component of the ER-mitochondria encounter structure (ERMES) or MDM complex, composed of MMM1, MDM10, MDM12 and MDM34. An MMM1 homodimer associates with one molecule of MDM12 on each side in a pairwise head-to-tail manner, and the SMP-LTD domains of MMM1 and MDM12 generate a continuous hydrophobic tunnel for phospholipid trafficking.

The protein localises to the mitochondrion outer membrane. The protein resides in the endoplasmic reticulum membrane. Its function is as follows. Component of the ERMES/MDM complex, which serves as a molecular tether to connect the endoplasmic reticulum (ER) and mitochondria. Components of this complex are involved in the control of mitochondrial shape and protein biogenesis, and function in nonvesicular lipid trafficking between the ER and mitochondria. MDM12 is required for the interaction of the ER-resident membrane protein MMM1 and the outer mitochondrial membrane-resident beta-barrel protein MDM10. The MDM12-MMM1 subcomplex functions in the major beta-barrel assembly pathway that is responsible for biogenesis of all mitochondrial outer membrane beta-barrel proteins, and acts in a late step after the SAM complex. The MDM10-MDM12-MMM1 subcomplex further acts in the TOM40-specific pathway after the action of the MDM12-MMM1 complex. Essential for establishing and maintaining the structure of mitochondria and maintenance of mtDNA nucleoids. This is Mitochondrial distribution and morphology protein 12 from Arthroderma otae (strain ATCC MYA-4605 / CBS 113480) (Microsporum canis).